Here is a 145-residue protein sequence, read N- to C-terminus: Flagellar assembly factor FliW (145 aa).

This sequence belongs to the FliW family. Interacts with translational regulator CsrA and flagellin(s).

It localises to the cytoplasm. In terms of biological role, acts as an anti-CsrA protein, binds CsrA and prevents it from repressing translation of its target genes, one of which is flagellin. Binds to flagellin and participates in the assembly of the flagellum. In Anoxybacillus flavithermus (strain DSM 21510 / WK1), this protein is Flagellar assembly factor FliW.